The sequence spans 180 residues: tRNA (cytidine(56)-2'-O)-methyltransferase (180 aa).

An S-adenosyl-L-methionine-binding site is contributed by Leu-85.

This sequence belongs to the aTrm56 family. Homodimer.

The protein localises to the cytoplasm. It catalyses the reaction cytidine(56) in tRNA + S-adenosyl-L-methionine = 2'-O-methylcytidine(56) in tRNA + S-adenosyl-L-homocysteine + H(+). In terms of biological role, specifically catalyzes the AdoMet-dependent 2'-O-ribose methylation of cytidine at position 56 in tRNAs. The protein is tRNA (cytidine(56)-2'-O)-methyltransferase of Methanobrevibacter smithii (strain ATCC 35061 / DSM 861 / OCM 144 / PS).